The following is a 1051-amino-acid chain: Carbamoyl phosphate synthase large chain (1051 aa).

The interval 1 to 399 (MKETPKKVLV…SLQKAVRMLD (399 aa)) is carboxyphosphate synthetic domain. Residues R127, R167, G173, G174, K206, L208, E213, G239, V240, H241, Q282, and E296 each contribute to the ATP site. One can recognise an ATP-grasp 1 domain in the interval 131 to 325 (RETMIENNLP…LAYVSAKLAL (195 aa)). Residues Q282, E296, and N298 each contribute to the Mg(2+) site. Positions 282, 296, and 298 each coordinate Mn(2+). The segment at 400–548 (IGEPGVVGGK…LTYNGTEDDL (149 aa)) is oligomerization domain. The tract at residues 549-930 (EFSQGNKLLI…LKSWLSSIPN (382 aa)) is carbamoyl phosphate synthetic domain. The ATP-grasp 2 domain occupies 673-863 (SKLLDKLGIS…LINESMKAIF (191 aa)). 10 residues coordinate ATP: R709, K748, I750, E755, G779, V780, H781, S782, Q822, and E834. Mg(2+) contacts are provided by Q822, E834, and N836. The Mn(2+) site is built by Q822, E834, and N836. The MGS-like domain occupies 930-1051 (NRIPNKNGIA…FEISEYGGGI (122 aa)). The segment at 931-1051 (RIPNKNGIAL…FEISEYGGGI (121 aa)) is allosteric domain.

It belongs to the CarB family. In terms of assembly, composed of two chains; the small (or glutamine) chain promotes the hydrolysis of glutamine to ammonia, which is used by the large (or ammonia) chain to synthesize carbamoyl phosphate. Tetramer of heterodimers (alpha,beta)4. Mg(2+) is required as a cofactor. Requires Mn(2+) as cofactor.

The catalysed reaction is hydrogencarbonate + L-glutamine + 2 ATP + H2O = carbamoyl phosphate + L-glutamate + 2 ADP + phosphate + 2 H(+). The enzyme catalyses hydrogencarbonate + NH4(+) + 2 ATP = carbamoyl phosphate + 2 ADP + phosphate + 2 H(+). It participates in amino-acid biosynthesis; L-arginine biosynthesis; carbamoyl phosphate from bicarbonate: step 1/1. The protein operates within pyrimidine metabolism; UMP biosynthesis via de novo pathway; (S)-dihydroorotate from bicarbonate: step 1/3. Large subunit of the glutamine-dependent carbamoyl phosphate synthetase (CPSase). CPSase catalyzes the formation of carbamoyl phosphate from the ammonia moiety of glutamine, carbonate, and phosphate donated by ATP, constituting the first step of 2 biosynthetic pathways, one leading to arginine and/or urea and the other to pyrimidine nucleotides. The large subunit (synthetase) binds the substrates ammonia (free or transferred from glutamine from the small subunit), hydrogencarbonate and ATP and carries out an ATP-coupled ligase reaction, activating hydrogencarbonate by forming carboxy phosphate which reacts with ammonia to form carbamoyl phosphate. This chain is Carbamoyl phosphate synthase large chain, found in Saccharolobus islandicus (strain M.16.27) (Sulfolobus islandicus).